The sequence spans 98 residues: Integration host factor subunit alpha (98 aa).

The tract at residues 49–71 (FGNFDLRDKNQRPGRNPKTGEDI) is disordered.

The protein belongs to the bacterial histone-like protein family. Heterodimer of an alpha and a beta chain.

In terms of biological role, this protein is one of the two subunits of integration host factor, a specific DNA-binding protein that functions in genetic recombination as well as in transcriptional and translational control. This Shewanella sp. (strain ANA-3) protein is Integration host factor subunit alpha.